The sequence spans 1465 residues: DNA polymerase III PolC-type (1465 aa).

The Exonuclease domain maps to 427 to 583 (YVVFDVETTG…YDAEATGRLL (157 aa)).

Belongs to the DNA polymerase type-C family. PolC subfamily.

It is found in the cytoplasm. It carries out the reaction DNA(n) + a 2'-deoxyribonucleoside 5'-triphosphate = DNA(n+1) + diphosphate. Required for replicative DNA synthesis. This DNA polymerase also exhibits 3' to 5' exonuclease activity. The protein is DNA polymerase III PolC-type of Streptococcus pyogenes serotype M6 (strain ATCC BAA-946 / MGAS10394).